The sequence spans 469 residues: UDP-N-acetylmuramate--L-alanine ligase (469 aa).

122–128 is an ATP binding site; it reads GTHGKTT.

Belongs to the MurCDEF family.

It is found in the cytoplasm. It carries out the reaction UDP-N-acetyl-alpha-D-muramate + L-alanine + ATP = UDP-N-acetyl-alpha-D-muramoyl-L-alanine + ADP + phosphate + H(+). Its pathway is cell wall biogenesis; peptidoglycan biosynthesis. In terms of biological role, cell wall formation. The protein is UDP-N-acetylmuramate--L-alanine ligase of Legionella pneumophila (strain Paris).